A 273-amino-acid chain; its full sequence is Large ribosomal subunit protein uL2 (273 aa).

Disordered regions lie at residues 28-53 (KPFA…TTRH) and 221-273 (RGTA…RRSK). Positions 39 to 48 (KSGGRNNNGR) are enriched in low complexity.

This sequence belongs to the universal ribosomal protein uL2 family. As to quaternary structure, part of the 50S ribosomal subunit. Forms a bridge to the 30S subunit in the 70S ribosome.

Its function is as follows. One of the primary rRNA binding proteins. Required for association of the 30S and 50S subunits to form the 70S ribosome, for tRNA binding and peptide bond formation. It has been suggested to have peptidyltransferase activity; this is somewhat controversial. Makes several contacts with the 16S rRNA in the 70S ribosome. The protein is Large ribosomal subunit protein uL2 of Enterobacter sp. (strain 638).